A 243-amino-acid chain; its full sequence is I/6 autoantigen (243 aa).

The region spanning 110-145 (LSVEEVDALFNALDSDNRGYVSVDEFMDALYGEEGR) is the EF-hand domain. The segment at 166–243 (PSWRMRPTPK…PPKQKAGCGC (78 aa)) is disordered. Over residues 176–196 (PTRKLRQKRKREQGQKRKQGQ) the composition is skewed to basic residues. A run of 6 repeats spans residues 181 to 188 (RQKRKREQ), 189 to 196 (GQKRKQGQ), 197 to 204 (RQKQEQGQ), 205 to 212 (RQKREQGQ), 213 to 220 (RQKQEQGQ), and 221 to 228 (KRKRERGG). Positions 181–228 (RQKRKREQGQKRKQGQRQKQEQGQRQKREQGQRQKQEQGQKRKRERGG) are 6 X 8 AA tandem repeats. The span at 198–220 (QKQEQGQRQKREQGQRQKQEQGQ) shows a compositional bias: basic and acidic residues.

The protein localises to the cytoplasm. Its subcellular location is the cytoskeleton. Its function is as follows. Microtubule-associated protein that may be involved in cross-linking microtubules. The sequence is that of I/6 autoantigen from Trypanosoma brucei brucei.